Here is a 491-residue protein sequence, read N- to C-terminus: Probable polygalacturonase (491 aa).

A helical transmembrane segment spans residues 15-35; the sequence is PIVSFYCFQVVSVLVAVVLLL. Residues asparagine 165, asparagine 175, and asparagine 214 are each glycosylated (N-linked (GlcNAc...) asparagine). PbH1 repeat units follow at residues 230–256, 257–278, 319–340, and 348–369; these read SRNI…NPDS, CTNT…AVKS, IQDV…RIKT, and VKDI…WMTG. Aspartate 271 (proton donor) is an active-site residue. Asparagine 399 and asparagine 421 each carry an N-linked (GlcNAc...) asparagine glycan.

Belongs to the glycosyl hydrolase 28 family.

The protein resides in the membrane. The catalysed reaction is (1,4-alpha-D-galacturonosyl)n+m + H2O = (1,4-alpha-D-galacturonosyl)n + (1,4-alpha-D-galacturonosyl)m.. The protein is Probable polygalacturonase of Vitis vinifera (Grape).